The primary structure comprises 197 residues: dITP/XTP pyrophosphatase (197 aa).

Position 8–13 (8–13) interacts with substrate; it reads TGNAGK. Residues Glu-40 and Asp-69 each contribute to the Mg(2+) site. Asp-69 acts as the Proton acceptor in catalysis. Residues Ser-70, 154-157, Lys-177, and 182-183 each bind substrate; these read FGYD and HR.

The protein belongs to the HAM1 NTPase family. Homodimer. The cofactor is Mg(2+).

It carries out the reaction XTP + H2O = XMP + diphosphate + H(+). The enzyme catalyses dITP + H2O = dIMP + diphosphate + H(+). The catalysed reaction is ITP + H2O = IMP + diphosphate + H(+). Pyrophosphatase that catalyzes the hydrolysis of nucleoside triphosphates to their monophosphate derivatives, with a high preference for the non-canonical purine nucleotides XTP (xanthosine triphosphate), dITP (deoxyinosine triphosphate) and ITP. Seems to function as a house-cleaning enzyme that removes non-canonical purine nucleotides from the nucleotide pool, thus preventing their incorporation into DNA/RNA and avoiding chromosomal lesions. This chain is dITP/XTP pyrophosphatase (rdgB), found in Escherichia coli O157:H7.